A 300-amino-acid chain; its full sequence is MPGLSDPVAFIKDFAAGGISAAISKTAVAPIERVKLLLQVQHISKQIAEADRYKGMVDCFVRIPREQGFSAFWRGNLANVIRYFPTQALNFAFKDKYKQVFLGGVDKNTQFTRYFIGNLASGGMAGATSLCFVYPLDFARTRLAADVGKGAEAREFKGLGDCISKIFKTDGLVGLYRGFGVSVQGIIIYRAAYFGFYDTARGMLPNPKTTPWYVSWAIAQCVTTVAGIVSYPFDTVRRRMMMQSGRAKSEIVYKGTLHCWATIAKQEGTGAFFKGAFSNVLRGTGGAFVLVLYDEIKKVL.

3 Solcar repeats span residues 8–100 (VAFI…YKQV), 113–203 (RYFI…ARGM), and 214–299 (VSWA…IKKV). The next 5 membrane-spanning stretches (helical) occupy residues 10–39 (FIKD…LLLQ), 77–101 (LANV…KQVF), 112–132 (TRYF…SLCF), 181–201 (VSVQ…DTAR), and 213–233 (YVSW…SYPF). Residues Arg82 and Lys94 each contribute to the ADP site. Arg237 contributes to the ADP binding site. Positions 237–242 (RRRMMM) are important for transport activity. A Nucleotide carrier signature motif motif is present at residues 237 to 242 (RRRMMM). The helical transmembrane segment at 276–293 (AFSNVLRGTGGAFVLVLY) threads the bilayer.

It belongs to the mitochondrial carrier (TC 2.A.29) family. As to quaternary structure, monomer.

It is found in the mitochondrion inner membrane. The catalysed reaction is ADP(in) + ATP(out) = ADP(out) + ATP(in). The matrix-open state (m-state) is inhibited by the membrane-permeable bongkrekic acid (BKA). The cytoplasmic-open state (c-state) is inhibited by the membrane-impermeable toxic inhibitor carboxyatractyloside (CATR). Functionally, ADP:ATP antiporter that mediates import of ADP into the mitochondrial matrix for ATP synthesis, and export of ATP out to fuel the cell. Cycles between the cytoplasmic-open state (c-state) and the matrix-open state (m-state): operates by the alternating access mechanism with a single substrate-binding site intermittently exposed to either the cytosolic (c-state) or matrix (m-state) side of the inner mitochondrial membrane. The chain is ADP,ATP carrier protein 2 from Anopheles gambiae (African malaria mosquito).